Consider the following 241-residue polypeptide: Tetraspanin-1 (241 aa).

The Cytoplasmic portion of the chain corresponds to 1–11; sequence MQCFSFIKTMM. Residues 12-32 form a helical membrane-spanning segment; the sequence is ILFNLLIFLCGAALLAVGIWV. The Extracellular segment spans residues 33-52; sequence SIDGASFLKIFGPLSSSAMQ. A helical membrane pass occupies residues 53–73; that stretch reads FVNVGYFLIAAGVVVFALGFL. Over 74–88 the chain is Cytoplasmic; that stretch reads GCYGAKTESKCALVT. Residues 89–109 form a helical membrane-spanning segment; sequence FFFILLLIFIAEVAAAVVALV. At 110–211 the chain is on the extracellular side; it reads YTTMAEHFLT…NQLLYDIRTN (102 aa). Residues Asn-141, Asn-154, Asn-178, and Asn-184 are each glycosylated (N-linked (GlcNAc...) asparagine). A helical membrane pass occupies residues 212–232; sequence AVTVGGVAAGIGGLELAAMIV. The Cytoplasmic portion of the chain corresponds to 233–241; sequence SMYLYCNLQ.

This sequence belongs to the tetraspanin (TM4SF) family. Interacts with SLC19A2. Interacts with NTRK1/TRKA.

It localises to the cell membrane. Its subcellular location is the lysosome membrane. Its function is as follows. Structural component of specialized membrane microdomains known as tetraspanin-enriched microdomains (TERMs), which act as platforms for receptor clustering and signaling. Participates thereby in diverse biological functions such as cell signal transduction, adhesion, migration and protein trafficking. Regulates neuronal differentiation in response to NGF by facilitating NGF-mediated activation of NTRK1/TRKA receptor tyrosine kinase and subsequent downstream signaling pathways. Plays a role in the inhibition of TNFalpha-induced apoptosis. Mechanistically, inhibits the NF-kappa-B signaling pathway by blocking phosphorylation of CHUK. Also promotes the stability of the thiamine transporter 1/SLC19A2 in intestinal epithelial cells leading to an increase of thiamine uptake process. In Homo sapiens (Human), this protein is Tetraspanin-1 (TSPAN1).